The chain runs to 179 residues: FADH(2)-dependent resorcinol hydroxylase, reductase component (179 aa).

Belongs to the non-flavoprotein flavin reductase family. In terms of assembly, the FADH(2)-dependent resorcinol hydroxylase is composed of two subunits, GraA (the oxygenase component) and GraD (the reductase component). Both subunits are required for activity.

The catalysed reaction is FADH2 + NAD(+) = FAD + NADH + 2 H(+). It participates in aromatic compound metabolism. Involved in the gamma-resorcylate (2,6-dihydroxybenzoate) catabolism. Reductase component of the resorcinol hydroxylase, which catalyzes the FADPH-dependent conversion of resorcinol to hydroxyquinol. Catalyzes the reduction of FAD by NADH. The reduced flavin is then transferred to the oxygenase component GraA. The chain is FADH(2)-dependent resorcinol hydroxylase, reductase component from Rhizobium sp. (strain MTP-10005).